The chain runs to 78 residues: RNA-binding protein Hfq (78 aa).

Residues Asp10 to Val69 form the Sm domain.

The protein belongs to the Hfq family. Homohexamer.

Its function is as follows. RNA chaperone that binds small regulatory RNA (sRNAs) and mRNAs to facilitate mRNA translational regulation in response to envelope stress, environmental stress and changes in metabolite concentrations. Also binds with high specificity to tRNAs. This chain is RNA-binding protein Hfq, found in Janthinobacterium sp. (strain Marseille) (Minibacterium massiliensis).